A 355-amino-acid chain; its full sequence is Green-sensitive opsin-1 (355 aa).

Topologically, residues 1 to 49 (MAAHADEPVFAARRYNEETTRESAFVYTNANNTRDPFEGPNYHIAPRWV) are extracellular. Residue Asn31 is glycosylated (N-linked (GlcNAc...) asparagine). The chain crosses the membrane as a helical span at residues 50–74 (YNLASLWMIIVVIASIFTNSLVIVA). Residues 75–86 (TAKFKKLRHPLN) lie on the Cytoplasmic side of the membrane. A helical membrane pass occupies residues 87-112 (WILVNLAIADLGETVLASTISVFNQV). Over 113–126 (FGYFVLGHPMCIFE) the chain is Extracellular. Cys123 and Cys200 are disulfide-bonded. A helical membrane pass occupies residues 127 to 146 (GWTVSVCGITALWSLTIISW). The Cytoplasmic segment spans residues 147–165 (ERWVVVCKPFGNVKFDGKW). The chain crosses the membrane as a helical span at residues 166 to 189 (AAGGIIFAWTWAIIWCTPPIFGWS). At 190-215 (RYWPHGLKTSCGPDVFSGSEDPGVAS) the chain is on the extracellular side. Residues 216–243 (YMVTLLLTCCILPLSVIIICYIFVWNAI) traverse the membrane as a helical segment. The Cytoplasmic segment spans residues 244 to 265 (HQVAQQQKDSESTQKAEKEVSR). Residues 266 to 289 (MVVVMILAFILCWGPYASFATFSA) traverse the membrane as a helical segment. Topologically, residues 290–297 (LNPGYAWH) are extracellular. Residues 298–322 (PLAAALPAYFAKSATIYNPIIYVFM) form a helical membrane-spanning segment. At Lys309 the chain carries N6-(retinylidene)lysine. Residues 323-355 (NRQFRSCIMQLFGKKVEDASEVSGSTTEVSTAS) are Cytoplasmic-facing.

This sequence belongs to the G-protein coupled receptor 1 family. Opsin subfamily. As to expression, the color pigments are found in the cone photoreceptor cells.

Its subcellular location is the membrane. In terms of biological role, visual pigments are the light-absorbing molecules that mediate vision. They consist of an apoprotein, opsin, covalently linked to cis-retinal. The chain is Green-sensitive opsin-1 (G103) from Psalidodon fasciatus (Banded astyanax).